A 1053-amino-acid chain; its full sequence is MPKRTDIKKVLLIGSGPIQIGQAAEFDFSGSQACRSLKEEGIEVVLVNSNPATIMTDPDMADQIYIEPLRANIIAKIIEKERPDGILSGMGGQTGLNLTAELAEMGALKGVEILGTPLEAIYKGEDREKFRDLMNEIGEPVPKSIVLNTLSQIDDAIAKIGLPAVVRPAYTLGGAGGGIGRTREELTRIVELGLSRSRIHQVLIEESVMGWKELEFEVMRDSTDTCIIVCSMENVDPMGIHTGESVVVAPILTLRDDEFQMMRSAAIHIIRALDVQGGCNIQFAFKDGDYRVIEVNPRVSRSSALASKATGYPIARVAAKIAIGLRLDEIKNSVTGCTAASFEPTIDYIVVKVPRWPFDKFKGADRTLTTSMKSTGEVMAIGRTLEESFMKAKRSIDTDVRTHTSPSEIRMILSRPTDERFHCLFDAFRQGFTLDEIAGLTSIVPFFLEKIKNIVDLEKRLAAGCTDEDIFLAKRYGFANTEIAALTGRGADTIEALVGAPAYKMVDTCAAEFPASTPYFYSTREGTSEIVRDKKQKILILGSGPIRIGQGIEFDYCTVHAVKALREEGVEVHIVNNNPETVSTDFDTSDRLFFEPMLLEDVTNILMTDEYYGVMVQFGGQNAVNLAVPLEKELKRRGMCTRILGTSPDAMDIAEDRDRFSVLLTTLQIPSPANSSAYSEAEAREKAERIGYPVLVRPSYVLGGRAMEIVHNTAELETYMKEAVRVSQHHPVLIDSYLRNAIELDVDAVCDGKEVLIGGIMEHIEQAGIHSGDSACVIPTQSLSPEVIATVREYTKKIALGLGVVGLVNIQMAVKDNVVYILEANPRASRTVPFVSKATGLPIAKIAAKVMIGKKLCDLGFHEAKIRHVAVKEVLLPFNKLAGVDTILGPEMKSTGEVMGIDYDFGLAFYKACISADNELPLKGNVFVSVNIGQKDEVIPIARRLRDLGLTLYGTEGTVDYLHEAGVEAHLVRKVQEGSPNVLDMMHHGEIRLIINTPQDRQSRQDHYQIMRAAVDFQIPYITTLQAARAAALAIDAIKREKITLEPLSHYLR.

Residues 1–397 are carboxyphosphate synthetic domain; it reads MPKRTDIKKV…SFMKAKRSID (397 aa). ATP is bound by residues R127, R167, G173, G174, E206, V208, E213, G239, I240, H241, Q282, and E294. An ATP-grasp 1 domain is found at 131 to 323; that stretch reads RDLMNEIGEP…IARVAAKIAI (193 aa). Residues Q282, E294, and N296 each coordinate Mg(2+). Mn(2+) is bound by residues Q282, E294, and N296. The segment at 398-530 is oligomerization domain; sequence TDVRTHTSPS…YSTREGTSEI (133 aa). The interval 531-919 is carbamoyl phosphate synthetic domain; that stretch reads VRDKKQKILI…YKACISADNE (389 aa). The ATP-grasp 2 domain occupies 661–852; that stretch reads SVLLTTLQIP…IAKIAAKVMI (192 aa). R697, S736, L738, E743, G768, I769, H770, S771, Q811, and E823 together coordinate ATP. Mg(2+)-binding residues include Q811, E823, and N825. Residues Q811, E823, and N825 each coordinate Mn(2+). The 136-residue stretch at 918–1053 folds into the MGS-like domain; sequence NELPLKGNVF…TLEPLSHYLR (136 aa). The allosteric domain stretch occupies residues 920-1053; the sequence is LPLKGNVFVS…TLEPLSHYLR (134 aa).

This sequence belongs to the CarB family. Composed of two chains; the small (or glutamine) chain promotes the hydrolysis of glutamine to ammonia, which is used by the large (or ammonia) chain to synthesize carbamoyl phosphate. Tetramer of heterodimers (alpha,beta)4. Mg(2+) is required as a cofactor. Requires Mn(2+) as cofactor.

It carries out the reaction hydrogencarbonate + L-glutamine + 2 ATP + H2O = carbamoyl phosphate + L-glutamate + 2 ADP + phosphate + 2 H(+). The enzyme catalyses hydrogencarbonate + NH4(+) + 2 ATP = carbamoyl phosphate + 2 ADP + phosphate + 2 H(+). It participates in amino-acid biosynthesis; L-arginine biosynthesis; carbamoyl phosphate from bicarbonate: step 1/1. The protein operates within pyrimidine metabolism; UMP biosynthesis via de novo pathway; (S)-dihydroorotate from bicarbonate: step 1/3. Its function is as follows. Large subunit of the glutamine-dependent carbamoyl phosphate synthetase (CPSase). CPSase catalyzes the formation of carbamoyl phosphate from the ammonia moiety of glutamine, carbonate, and phosphate donated by ATP, constituting the first step of 2 biosynthetic pathways, one leading to arginine and/or urea and the other to pyrimidine nucleotides. The large subunit (synthetase) binds the substrates ammonia (free or transferred from glutamine from the small subunit), hydrogencarbonate and ATP and carries out an ATP-coupled ligase reaction, activating hydrogencarbonate by forming carboxy phosphate which reacts with ammonia to form carbamoyl phosphate. The polypeptide is Carbamoyl phosphate synthase large chain (Methanoregula boonei (strain DSM 21154 / JCM 14090 / 6A8)).